Reading from the N-terminus, the 635-residue chain is Biosynthetic arginine decarboxylase (635 aa).

N6-(pyridoxal phosphate)lysine is present on lysine 100. 282–292 (LDIGGGLGVDY) contributes to the substrate binding site.

This sequence belongs to the Orn/Lys/Arg decarboxylase class-II family. SpeA subfamily. Mg(2+) serves as cofactor. Requires pyridoxal 5'-phosphate as cofactor.

The catalysed reaction is L-arginine + H(+) = agmatine + CO2. The protein operates within amine and polyamine biosynthesis; agmatine biosynthesis; agmatine from L-arginine: step 1/1. In terms of biological role, catalyzes the biosynthesis of agmatine from arginine. The polypeptide is Biosynthetic arginine decarboxylase (Geotalea uraniireducens (strain Rf4) (Geobacter uraniireducens)).